The following is a 67-amino-acid chain: Large ribosomal subunit protein bL35 (67 aa).

The protein belongs to the bacterial ribosomal protein bL35 family.

The protein is Large ribosomal subunit protein bL35 of Brachyspira hyodysenteriae (strain ATCC 49526 / WA1).